A 519-amino-acid polypeptide reads, in one-letter code: 6-phosphofructo-2-kinase/fructose-2,6-bisphosphatase 2 (519 aa).

Residues 1-17 show a composition bias toward polar residues; the sequence is MSENSTFSTEDSCNSSY. Residues 1–22 form a disordered region; the sequence is MSENSTFSTEDSCNSSYKPHAS. Ser2 carries the N-acetylserine modification. Residues 2–251 form a 6-phosphofructo-2-kinase region; that stretch reads SENSTFSTED…VYYLMNIHVH (250 aa). Residue Ser32 is modified to Phosphoserine; by PKA. 48–56 lines the ATP pocket; the sequence is GLPARGKTY. Beta-D-fructose 6-phosphate contacts are provided by Arg81 and Arg105. Asp131 is a catalytic residue. Beta-D-fructose 6-phosphate-binding residues include Thr133 and Arg139. Residue Cys161 is part of the active site. ATP is bound at residue 170–175; the sequence is NILEVK. Beta-D-fructose 6-phosphate-binding residues include Lys175, Arg196, and Tyr200. Residues 252–519 form a fructose-2,6-bisphosphatase region; that stretch reads PRTIYLCRHG…PKTQVSIPVV (268 aa). Residue Arg259 participates in beta-D-fructose 2,6-bisphosphate binding. His260 (tele-phosphohistidine intermediate) is an active-site residue. Beta-D-fructose 2,6-bisphosphate-binding residues include Asn266 and Gly272. The Proton donor/acceptor role is filled by Glu329. 6 residues coordinate beta-D-fructose 2,6-bisphosphate: Tyr340, Arg354, Lys358, Tyr369, Gln395, and Arg399. 351 to 354 is a binding site for ATP; that stretch reads FALR. ATP is bound by residues 395–399 and Tyr431; that span reads QAVMR. The tract at residues 448–493 is disordered; it reads HRDKPTHNFPKSQTPVRMRRNSFTPLSSSNTIRRPRNYSVGSRPLK. The segment covering 456-479 has biased composition (polar residues); it reads FPKSQTPVRMRRNSFTPLSSSNTI. Ser469 is subject to Phosphoserine. Thr471 bears the Phosphothreonine mark. Thr478 carries the phosphothreonine; by PKC modification. 2 positions are modified to phosphoserine: Ser486 and Ser496. Residues 500 to 519 form a disordered region; sequence ALDMQEGADQPKTQVSIPVV. Over residues 510–519 the composition is skewed to polar residues; it reads PKTQVSIPVV.

In the C-terminal section; belongs to the phosphoglycerate mutase family. As to quaternary structure, homodimer. Forms a heterodimer with PFKFB3. In terms of processing, phosphorylation by AMPK stimulates activity. In terms of tissue distribution, highest levels in kidney; also found in heart, brain, spleen, lung, liver, skeletal muscle and testis.

The enzyme catalyses beta-D-fructose 2,6-bisphosphate + H2O = beta-D-fructose 6-phosphate + phosphate. It catalyses the reaction beta-D-fructose 6-phosphate + ATP = beta-D-fructose 2,6-bisphosphate + ADP + H(+). Phosphorylation results in the activation of the kinase activity. Functionally, synthesis and degradation of fructose 2,6-bisphosphate. The protein is 6-phosphofructo-2-kinase/fructose-2,6-bisphosphatase 2 (Pfkfb2) of Mus musculus (Mouse).